A 107-amino-acid chain; its full sequence is UPF0145 protein ETA_21660 (107 aa).

This sequence belongs to the UPF0145 family.

This Erwinia tasmaniensis (strain DSM 17950 / CFBP 7177 / CIP 109463 / NCPPB 4357 / Et1/99) protein is UPF0145 protein ETA_21660.